We begin with the raw amino-acid sequence, 167 residues long: UPF0336 protein MAP_4109 (167 aa).

The region spanning 21-124 is the MaoC-like domain; it reads GREQLRQFAL…RFGADIVVTK (104 aa).

It belongs to the UPF0336 family.

The polypeptide is UPF0336 protein MAP_4109 (Mycolicibacterium paratuberculosis (strain ATCC BAA-968 / K-10) (Mycobacterium paratuberculosis)).